Here is a 98-residue protein sequence, read N- to C-terminus: UPF0213 protein in ldhD 5'region (98 aa).

The GIY-YIG domain occupies 7 to 84 (NGFYFYVLWC…KKQSRKEKLK (78 aa)).

It belongs to the UPF0213 family.

This chain is UPF0213 protein in ldhD 5'region, found in Pediococcus acidilactici.